We begin with the raw amino-acid sequence, 763 residues long: High glucose sensor RGT2 (763 aa).

Positions 1–28 (MNDSQNCLRQREENSHLNPGNDFGHHQG) are disordered. The Cytoplasmic portion of the chain corresponds to 1–99 (MNDSQNCLRQ…PLPLRSNVMS (99 aa)). Residues 100 to 120 (VLVGIFVAVGGFLFGYDTGLI) traverse the membrane as a helical segment. The Extracellular segment spans residues 121–144 (NSITDMPYVKTYIAPNHSYFTTSQ). An N-linked (GlcNAc...) asparagine glycan is attached at asparagine 136. The helical transmembrane segment at 145-165 (IAILVSFLSLGTFFGALIAPY) threads the bilayer. Topologically, residues 166–175 (ISDSYGRKPT) are cytoplasmic. Residues 176 to 196 (IMFSTAVIFSIGNSLQVASGG) traverse the membrane as a helical segment. Leucine 197 is a topological domain (extracellular). The helical transmembrane segment at 198-218 (VLLIVGRVISGIGIGIISAVV) threads the bilayer. Residues 219–231 (PLYQAEAAQKNLR) are Cytoplasmic-facing. The chain crosses the membrane as a helical span at residues 232-252 (GAIISSYQWAITIGLLVSSAV). The Extracellular segment spans residues 253-266 (SQGTHSKNGPSSYR). A helical membrane pass occupies residues 267–287 (IPIGLQYVWSSILAVGMIFLP). Over 288 to 357 (ESPRYYVLKD…SENRPKQILR (70 aa)) the chain is Cytoplasmic. A helical membrane pass occupies residues 358 to 378 (IFTGIAIQAFQQASGINFIFY). Residues 379-393 (YGVNFFNNTGVDNSY) lie on the Extracellular side of the membrane. Asparagine 385 carries N-linked (GlcNAc...) asparagine glycosylation. The chain crosses the membrane as a helical span at residues 394–414 (LVSFISYAVNVAFSIPGMYLV). At 415–421 (DRIGRRP) the chain is on the cytoplasmic side. The chain crosses the membrane as a helical span at residues 422 to 442 (VLLAGGVIMAIANLVIAIVGV). The Extracellular segment spans residues 443-452 (SEGKTVVASK). Residues 453–473 (IMIAFICLFIAAFSATWGGVV) traverse the membrane as a helical segment. Over 474–491 (WVVSAELYPLGVRSKCTA) the chain is Cytoplasmic. The helical transmembrane segment at 492-512 (ICAAANWLVNFTCALITPYIV) threads the bilayer. Residues 513 to 524 (DVGSHTSSMGPK) lie on the Extracellular side of the membrane. A helical membrane pass occupies residues 525 to 545 (IFFIWGGLNVVAVIVVYFAVY). At 546–763 (ETRGLTLEEI…SKHSQYTSPQ (218 aa)) the chain is on the cytoplasmic side. Residues 725–737 (SSTTSNDTSFSPS) are compositionally biased toward low complexity. Positions 725–763 (SSTTSNDTSFSPSHNSNARTSSNWTSDLASKHSQYTSPQ) are disordered. Residues 738-763 (HNSNARTSSNWTSDLASKHSQYTSPQ) show a composition bias toward polar residues.

It belongs to the major facilitator superfamily. Sugar transporter (TC 2.A.1.1) family. Interacts with YCK1. Interacts with MTH1 and STD1. Phosphorylated in the C-terminal tail on Yck consensus sites in a yeast casein kinases YCK1 and YCK2 (Yck)-dependent manner. This phosphorylation is required for interaction with HXT corepressors MTH1 and STD1 and ultimately HXT expression.

It is found in the cell membrane. Functionally, low-affinity high glucose sensor that is part of the sensor/receptor-repressor (SSR) glucose-signaling pathway, which detects extracellular glucose and induces expression of glucose transporters that bring glucose into the cell. The transporter-like sensor generates an intracellular signal in the presence of high levels of glucose to promote high glucose-induced expression of HXT1. Binding of glucose to the RGT2 transmembrane domain activates a downstream signaling cascade, leading to phosphorylation of the RGT1 corepressors MTH1 and STD1, targeting them for SCF(Grr1)-dependent ubiquitination and degradation. Depletion of the corepressors robs RGT1 of its ability to repress expression of HXT genes, leading to accumulation of glucose transporters in the plasma membrane. Even though RGT2 is similar to glucose transporters, it appears to be unable to transport glucose. This is High glucose sensor RGT2 from Saccharomyces cerevisiae (strain ATCC 204508 / S288c) (Baker's yeast).